A 315-amino-acid chain; its full sequence is Olfactory receptor 4A8 (315 aa).

Topologically, residues 1-24 (MRQNNNITEFVLLGFSQYPDVQNA) are extracellular. Residue asparagine 6 is glycosylated (N-linked (GlcNAc...) asparagine). The chain crosses the membrane as a helical span at residues 25 to 45 (LFVMFLLIYIVTMVGNLLIVV). The Cytoplasmic portion of the chain corresponds to 46 to 57 (SIIASPFLGSPV). Residues 58 to 80 (YFFLACLSFIDAVYSTTISPVLI) form a helical membrane-spanning segment. Topologically, residues 81–95 (VDLLCDKKTISFPAC) are extracellular. A disulfide bridge connects residues cysteine 95 and cysteine 177. The helical transmembrane segment at 96–116 (MGQLFIEHLFGDTDVFLLVVM) threads the bilayer. Residues 117 to 139 (AYDRYVATCKPLRYLTIMNRQVC) lie on the Cytoplasmic side of the membrane. A helical membrane pass occupies residues 140-160 (ILLLVVAVTGGFLHSVFQILV). At 161–193 (VYSLPFCGPNVIYHFFCNIYPLLDLECTDTYFV) the chain is on the extracellular side. Residues 194–214 (GLAVVFNGGAICMVIFTLLLI) traverse the membrane as a helical segment. At 215–235 (SYGVILNSLKTYSPEGRHKAP) the chain is on the cytoplasmic side. Residues 236 to 256 (FICSSHFIMVILFFVPCIFLY) form a helical membrane-spanning segment. At 257–266 (VRPVSNFPID) the chain is on the extracellular side. Residues 267–287 (KFLTVFYSVITPKLNPFIYML) form a helical membrane-spanning segment. The Cytoplasmic portion of the chain corresponds to 288–315 (RNSEMRNAIENLLGYQSGKTGFRCSKLN).

Belongs to the G-protein coupled receptor 1 family.

The protein resides in the cell membrane. Odorant receptor. The polypeptide is Olfactory receptor 4A8 (OR4A8) (Homo sapiens (Human)).